The primary structure comprises 190 residues: dCTP deaminase, dUMP-forming (190 aa).

DCTP is bound by residues 101–106 (KSSLGR), aspartate 119, 127–129 (TLE), glutamine 148, tyrosine 162, and glutamine 174. The active-site Proton donor/acceptor is glutamate 129. The disordered stretch occupies residues 162–184 (YGSAKVGSKYQGQRGPTPSRSYQ). A compositionally biased stretch (polar residues) spans 171–184 (YQGQRGPTPSRSYQ).

It belongs to the dCTP deaminase family. Homotrimer.

It catalyses the reaction dCTP + 2 H2O = dUMP + NH4(+) + diphosphate. The protein operates within pyrimidine metabolism; dUMP biosynthesis; dUMP from dCTP: step 1/1. Bifunctional enzyme that catalyzes both the deamination of dCTP to dUTP and the hydrolysis of dUTP to dUMP without releasing the toxic dUTP intermediate. This is dCTP deaminase, dUMP-forming from Mycobacterium sp. (strain JLS).